We begin with the raw amino-acid sequence, 69 residues long: uncharacterized protein (69 aa).

Positions 1 to 21 (MNTKFILILLVLIISTIFVNS) are cleaved as a signal peptide.

The protein resides in the secreted. This is an uncharacterized protein from Dictyostelium discoideum (Social amoeba).